A 445-amino-acid chain; its full sequence is MREIVHLQTGQCGNQIGAKFWEVVSDEHGIEADGLYKGTNDQQLERISVYYNEIGANKYVPRAILVDLEPGTMDSVRSGPLGGLFRPDNFVFGQSGAGNNWAKGHYTEGAELVDAVLDVVRKEAEGTDCLQGFQITHSLGGGTGAGMGTLLISKIREEYPDRMMCTFSVVPSPKVSDTVVEPYNATLSVHQLVENSDETFCIDNEALYDICFRTLKLSTPTYGDLNHLVSFVMSGITTSLRFPGQLNSDLRKLAVNLVPFPRLHFFMTGFAPLTARGSQQYRAVTVPELTQQMFDAKNMMAASDPRHGRYLTVAAMFRGKVSMKEVEEQMQNVQNKNSAYFVEWIPNNVLASQCDIAPRGLRMSVTFLGNSTAIQELFKRVSDQFTAMFKRKAFLHWYTQEGMDEMEFTEAESNMQDLVAEYQQYQDATVEEEGEYEEEVIEDQE.

GTP-binding residues include Gln11, Glu69, Ser138, Gly142, Thr143, Gly144, Asn204, and Asn226. Residue Glu69 participates in Mg(2+) binding.

It belongs to the tubulin family. As to quaternary structure, dimer of alpha and beta chains. A typical microtubule is a hollow water-filled tube with an outer diameter of 25 nm and an inner diameter of 15 nM. Alpha-beta heterodimers associate head-to-tail to form protofilaments running lengthwise along the microtubule wall with the beta-tubulin subunit facing the microtubule plus end conferring a structural polarity. Microtubules usually have 13 protofilaments but different protofilament numbers can be found in some organisms and specialized cells. The cofactor is Mg(2+).

The protein localises to the cytoplasm. It is found in the cytoskeleton. In terms of biological role, tubulin is the major constituent of microtubules, a cylinder consisting of laterally associated linear protofilaments composed of alpha- and beta-tubulin heterodimers. Microtubules grow by the addition of GTP-tubulin dimers to the microtubule end, where a stabilizing cap forms. Below the cap, tubulin dimers are in GDP-bound state, owing to GTPase activity of alpha-tubulin. In Schizophyllum commune (Split gill fungus), this protein is Tubulin beta chain (TUB-2).